Consider the following 390-residue polypeptide: Neuromedin-B receptor (390 aa).

The Extracellular segment spans residues 1–44; that stretch reads MPPKSLSNLSQTAGVNQSGFFPGASERDFLPATDRTTAEFVIRC. Residues N8 and N16 are each glycosylated (N-linked (GlcNAc...) asparagine). A helical membrane pass occupies residues 45–65; that stretch reads VIPSLYLLIITVGLLGNIVLV. Topologically, residues 66–76 are cytoplasmic; it reads KIFLTNSAMRS. Residues 77–97 traverse the membrane as a helical segment; sequence VPNIFISNLAAGDVLLLLTCV. The Extracellular portion of the chain corresponds to 98–117; sequence PVDASRYFLDEWMFGKVGCK. C116 and C198 form a disulfide bridge. A helical membrane pass occupies residues 118–138; sequence LIPVIQLTSVGVSVFTLTALS. At 139–155 the chain is on the cytoplasmic side; it reads ADRYRAIVNPMDIQTSG. A helical membrane pass occupies residues 156–176; the sequence is AVLWTCVKAGGIWVVSVLLAV. Residues 177 to 210 lie on the Extracellular side of the membrane; the sequence is PEAVFSEVARIDGLDNGSFTACIPYPQTDELHPK. N192 is a glycosylation site (N-linked (GlcNAc...) asparagine). A helical membrane pass occupies residues 211–231; that stretch reads IHSVLIFLVYFLIPLGIISVY. Topologically, residues 232–266 are cytoplasmic; sequence YYHIAKTLIKSAHNLPGEYNEHTKKQMETRKRLAK. Residues 267–287 form a helical membrane-spanning segment; sequence IVLVFVGCFVFCWFPNHILYM. At 288-305 the chain is on the extracellular side; that stretch reads YRSFNYNEIDPSLGHMIV. A helical transmembrane segment spans residues 306–328; sequence TLVARVLSFCNSCVNPFALYLLS. The Cytoplasmic portion of the chain corresponds to 329 to 390; it reads ESFRKHFNNQ…GHSVKQEMAL (62 aa). C341 carries the S-palmitoyl cysteine lipid modification. S352 is subject to Phosphoserine.

It belongs to the G-protein coupled receptor 1 family. In terms of tissue distribution, highly expressed in peripheral tissues where it is detected in the respiratory system, circulatory system, digestive system, urogenital system, lymphatic organs and endocrine system (at protein level). In the testis, expressed mainly in Leydig cells (at protein level).

The protein resides in the cell membrane. Functionally, receptor for neuromedin-B. Contributes to the maintenance of basal sigh rate through signaling in the pre-Botzinger complex, a cluster of several thousand neurons in the ventrolateral medulla responsible for inspiration during respiratory activity. Contributes to the induction of sneezing following exposure to chemical irritants or allergens which causes release of NMB by nasal sensory neurons and activation of NMBR-expressing neurons in the sneeze-evoking region of the brainstem. These in turn activate neurons of the caudal ventral respiratory group, giving rise to the sneezing response. Contributes to induction of acute itch, possibly through its activation on dorsal root ganglion neurons by the NMB peptide. Plays a role in the innate immune response to influenza A virus infection by enhancing interferon alpha expression and reducing expression of IL6. Plays a role in CSF1-induced proliferation of osteoclast precursors by contributing to the positive regulation of the expression of the CSF1 receptor CSF1R. This is Neuromedin-B receptor (NMBR) from Sus scrofa (Pig).